The chain runs to 482 residues: Anthocyanin 3'-O-beta-glucosyltransferase (482 aa).

The active-site Proton acceptor is H16. H16 contacts an anthocyanidin. The Charge relay role is filled by D119. A349, Q351, H366, W369, N370, S371, and E374 together coordinate UDP-alpha-D-glucose. Position 389 (A389) interacts with an anthocyanidin. UDP-alpha-D-glucose is bound by residues E390 and Q391.

It belongs to the UDP-glycosyltransferase family. In terms of processing, the N-terminus is blocked. As to expression, abundant in petals and barely detected in leaves.

The catalysed reaction is delphinidin 3,5-bis-O-beta-D-glucoside + UDP-alpha-D-glucose = delphinidin 3,3',5-tri-O-beta-D-glucoside + UDP + H(+). Specifically glucosylates the 3'-hydroxy group of delphinidin 3,5-di-O-glucoside to produce gentiodelphin. Shows a strict specificity for UDP-glucose as donor. In Gentiana triflora (Clustered gentian), this protein is Anthocyanin 3'-O-beta-glucosyltransferase.